A 407-amino-acid polypeptide reads, in one-letter code: Succinyl-diaminopimelate desuccinylase (407 aa).

The segment covering 1–10 (MSDIDNNLTS) has biased composition (polar residues). A disordered region spans residues 1–20 (MSDIDNNLTSQTHQQATHQQ). The segment covering 11–20 (QTHQQATHQQ) has biased composition (low complexity). Histidine 93 contacts Zn(2+). Aspartate 95 is an active-site residue. A Zn(2+)-binding site is contributed by aspartate 126. Glutamate 160 acts as the Proton acceptor in catalysis. Glutamate 161, glutamate 189, and histidine 379 together coordinate Zn(2+).

The protein belongs to the peptidase M20A family. DapE subfamily. Homodimer. It depends on Zn(2+) as a cofactor. Requires Co(2+) as cofactor.

It carries out the reaction N-succinyl-(2S,6S)-2,6-diaminopimelate + H2O = (2S,6S)-2,6-diaminopimelate + succinate. Its pathway is amino-acid biosynthesis; L-lysine biosynthesis via DAP pathway; LL-2,6-diaminopimelate from (S)-tetrahydrodipicolinate (succinylase route): step 3/3. Catalyzes the hydrolysis of N-succinyl-L,L-diaminopimelic acid (SDAP), forming succinate and LL-2,6-diaminopimelate (DAP), an intermediate involved in the bacterial biosynthesis of lysine and meso-diaminopimelic acid, an essential component of bacterial cell walls. This Psychrobacter arcticus (strain DSM 17307 / VKM B-2377 / 273-4) protein is Succinyl-diaminopimelate desuccinylase.